Here is a 159-residue protein sequence, read N- to C-terminus: Eukaryotic translation initiation factor 5A-3 (159 aa).

Residues Met-1–Ala-12 show a composition bias toward basic and acidic residues. The segment at Met-1–Pro-21 is disordered. Lys-52 is modified (hypusine).

Belongs to the eIF-5A family. In terms of processing, lys-52 undergoes hypusination, a unique post-translational modification that consists in the addition of a butylamino group from spermidine to lysine side chain, leading to the formation of the unusual amino acid hypusine. eIF-5As are the only known proteins to undergo this modification, which is essential for their function.

Its function is as follows. Translation factor that promotes translation elongation and termination, particularly upon ribosome stalling at specific amino acid sequence contexts. Binds between the exit (E) and peptidyl (P) site of the ribosome and promotes rescue of stalled ribosome: specifically required for efficient translation of polyproline-containing peptides as well as other motifs that stall the ribosome. Acts as a ribosome quality control (RQC) cofactor by joining the RQC complex to facilitate peptidyl transfer during CAT tailing step. The chain is Eukaryotic translation initiation factor 5A-3 from Solanum lycopersicum (Tomato).